A 201-amino-acid polypeptide reads, in one-letter code: 3-isopropylmalate dehydratase small subunit (201 aa).

It belongs to the LeuD family. LeuD type 1 subfamily. As to quaternary structure, heterodimer of LeuC and LeuD.

It carries out the reaction (2R,3S)-3-isopropylmalate = (2S)-2-isopropylmalate. It participates in amino-acid biosynthesis; L-leucine biosynthesis; L-leucine from 3-methyl-2-oxobutanoate: step 2/4. Catalyzes the isomerization between 2-isopropylmalate and 3-isopropylmalate, via the formation of 2-isopropylmaleate. The sequence is that of 3-isopropylmalate dehydratase small subunit from Shewanella baltica (strain OS155 / ATCC BAA-1091).